A 447-amino-acid chain; its full sequence is Methionine aminopeptidase 2-2 (447 aa).

The disordered stretch occupies residues 1–89 (MAAQTAPELA…PRIPLTTLFP (89 aa)). Residues 15-30 (NKNSGSAEANVVSNGG) are compositionally biased toward polar residues. Residues 34-47 (DDAENEGDSDDDKD) show a composition bias toward acidic residues. The segment covering 59 to 73 (KKKKKKRSKKKKKAA) has biased composition (basic residues). His-197 serves as a coordination point for substrate. A divalent metal cation-binding residues include Asp-217, Asp-228, and His-297. Residue His-305 participates in substrate binding. A divalent metal cation contacts are provided by Glu-333 and Glu-428.

The protein belongs to the peptidase M24A family. Methionine aminopeptidase eukaryotic type 2 subfamily. Co(2+) is required as a cofactor. Zn(2+) serves as cofactor. Requires Mn(2+) as cofactor. The cofactor is Fe(2+).

Its subcellular location is the cytoplasm. The catalysed reaction is Release of N-terminal amino acids, preferentially methionine, from peptides and arylamides.. Cotranslationally removes the N-terminal methionine from nascent proteins. The N-terminal methionine is often cleaved when the second residue in the primary sequence is small and uncharged (Met-Ala-, Cys, Gly, Pro, Ser, Thr, or Val). This Arthroderma otae (strain ATCC MYA-4605 / CBS 113480) (Microsporum canis) protein is Methionine aminopeptidase 2-2.